The following is a 51-amino-acid chain: DNA-directed RNA polymerase subunit Rpo12 (51 aa).

Cys-14, Cys-29, and Cys-32 together coordinate Zn(2+).

It belongs to the archaeal Rpo12/eukaryotic RPC10 RNA polymerase subunit family. In terms of assembly, part of the RNA polymerase complex. Zn(2+) serves as cofactor.

The protein resides in the cytoplasm. It carries out the reaction RNA(n) + a ribonucleoside 5'-triphosphate = RNA(n+1) + diphosphate. Its function is as follows. DNA-dependent RNA polymerase (RNAP) catalyzes the transcription of DNA into RNA using the four ribonucleoside triphosphates as substrates. This Methanopyrus kandleri (strain AV19 / DSM 6324 / JCM 9639 / NBRC 100938) protein is DNA-directed RNA polymerase subunit Rpo12.